Here is a 335-residue protein sequence, read N- to C-terminus: Holliday junction branch migration complex subunit RuvB (335 aa).

The interval Ala4–Tyr184 is large ATPase domain (RuvB-L). Residues Ile23, Arg24, Gly65, Lys68, Thr69, Thr70, Glu131–Tyr133, Arg174, Tyr184, and Arg221 each bind ATP. Thr69 serves as a coordination point for Mg(2+). The segment at Ser185 to Asp255 is small ATPAse domain (RuvB-S). A head domain (RuvB-H) region spans residues Asp258–Asp335. Positions 294, 313, and 318 each coordinate DNA.

The protein belongs to the RuvB family. In terms of assembly, homohexamer. Forms an RuvA(8)-RuvB(12)-Holliday junction (HJ) complex. HJ DNA is sandwiched between 2 RuvA tetramers; dsDNA enters through RuvA and exits via RuvB. An RuvB hexamer assembles on each DNA strand where it exits the tetramer. Each RuvB hexamer is contacted by two RuvA subunits (via domain III) on 2 adjacent RuvB subunits; this complex drives branch migration. In the full resolvosome a probable DNA-RuvA(4)-RuvB(12)-RuvC(2) complex forms which resolves the HJ.

It localises to the cytoplasm. It catalyses the reaction ATP + H2O = ADP + phosphate + H(+). In terms of biological role, the RuvA-RuvB-RuvC complex processes Holliday junction (HJ) DNA during genetic recombination and DNA repair, while the RuvA-RuvB complex plays an important role in the rescue of blocked DNA replication forks via replication fork reversal (RFR). RuvA specifically binds to HJ cruciform DNA, conferring on it an open structure. The RuvB hexamer acts as an ATP-dependent pump, pulling dsDNA into and through the RuvAB complex. RuvB forms 2 homohexamers on either side of HJ DNA bound by 1 or 2 RuvA tetramers; 4 subunits per hexamer contact DNA at a time. Coordinated motions by a converter formed by DNA-disengaged RuvB subunits stimulates ATP hydrolysis and nucleotide exchange. Immobilization of the converter enables RuvB to convert the ATP-contained energy into a lever motion, pulling 2 nucleotides of DNA out of the RuvA tetramer per ATP hydrolyzed, thus driving DNA branch migration. The RuvB motors rotate together with the DNA substrate, which together with the progressing nucleotide cycle form the mechanistic basis for DNA recombination by continuous HJ branch migration. Branch migration allows RuvC to scan DNA until it finds its consensus sequence, where it cleaves and resolves cruciform DNA. The chain is Holliday junction branch migration complex subunit RuvB from Haemophilus influenzae (strain PittEE).